A 332-amino-acid chain; its full sequence is Mitochondrial glycine transporter (332 aa).

Solcar repeat units lie at residues 11–94 (SSSY…LRQN), 121–205 (LSNL…LKKR), and 235–319 (TSAS…LIRR). The next 6 helical transmembrane spans lie at 17–42 (FGAG…TRVQ), 69–95 (GTVP…RQNV), 127–152 (LTTG…VRYE), 180–203 (GFGA…EELK), 239–265 (INFG…KTRI), and 294–312 (GLGL…AWTI).

Belongs to the mitochondrial carrier (TC 2.A.29) family. SLC25A38 subfamily.

The protein resides in the mitochondrion inner membrane. The enzyme catalyses glycine(in) = glycine(out). In terms of biological role, mitochondrial glycine transporter that imports glycine into the mitochondrial matrix. Plays an important role in providing glycine for the first enzymatic step in heme biosynthesis, the condensation of glycine with succinyl-CoA to produce 5-aminolevulinate (ALA) in the mitochondrial matrix. This is Mitochondrial glycine transporter from Botryotinia fuckeliana (strain B05.10) (Noble rot fungus).